The chain runs to 376 residues: Flagellin B (376 aa).

Residues 103–129 (SNSSSERRAIQEEVSALNDELNRIAET) are a coiled coil.

This sequence belongs to the bacterial flagellin family. In terms of assembly, heteromer of multiple flagellin subunits including FlaA, FlaB, FlaC, FlaD and FlaE.

Its subcellular location is the secreted. It localises to the bacterial flagellum. Flagellin is the subunit protein which polymerizes to form the filaments of bacterial flagella. FlaB is not essential for flagellar synthesis and motility. The polypeptide is Flagellin B (flaB) (Vibrio cholerae serotype O1 (strain ATCC 39541 / Classical Ogawa 395 / O395)).